Consider the following 257-residue polypeptide: Ribonuclease HII (257 aa).

Residues 72–257 (ERVAGIDEVG…FSPVQKILQA (186 aa)) form the RNase H type-2 domain. Residues Asp78, Glu79, and Asp170 each coordinate a divalent metal cation.

The protein belongs to the RNase HII family. Mn(2+) serves as cofactor. Requires Mg(2+) as cofactor.

Its subcellular location is the cytoplasm. It catalyses the reaction Endonucleolytic cleavage to 5'-phosphomonoester.. In terms of biological role, endonuclease that specifically degrades the RNA of RNA-DNA hybrids. The chain is Ribonuclease HII from Levilactobacillus brevis (strain ATCC 367 / BCRC 12310 / CIP 105137 / JCM 1170 / LMG 11437 / NCIMB 947 / NCTC 947) (Lactobacillus brevis).